The primary structure comprises 125 residues: Ly6/PLAUR domain-containing protein 2 (125 aa).

The first 22 residues, 1–22 (MRGTRLALLALVLAACGELAPA), serve as a signal peptide directing secretion. The 76-residue stretch at 25–100 (CYVCPEPTGV…VSCCNTELCN (76 aa)) folds into the UPAR/Ly6 domain. Asn46 carries an N-linked (GlcNAc...) asparagine glycan. The GPI-anchor amidated glycine moiety is linked to residue Gly103. Residues 104–125 (APALNSLHCGALTLLPLLSLRL) constitute a propeptide, removed in mature form.

The protein localises to the cell membrane. The sequence is that of Ly6/PLAUR domain-containing protein 2 (LYPD2) from Homo sapiens (Human).